A 485-amino-acid chain; its full sequence is Adenosylhomocysteinase (485 aa).

Substrate contacts are provided by Thr64, Asp139, and Glu205. NAD(+) is bound at residue 206–208; it reads TTT. Substrate-binding residues include Lys235 and Asp239. Residues Asn240, 269 to 274, Glu292, Asn327, and 348 to 350 each bind NAD(+); these read GYGDVG and IGH.

It belongs to the adenosylhomocysteinase family. Homotetramer. NAD(+) serves as cofactor.

The enzyme catalyses S-adenosyl-L-homocysteine + H2O = L-homocysteine + adenosine. The protein operates within amino-acid biosynthesis; L-homocysteine biosynthesis; L-homocysteine from S-adenosyl-L-homocysteine: step 1/1. Adenosylhomocysteine is a competitive inhibitor of S-adenosyl-L-methionine-dependent methyl transferase reactions; therefore adenosylhomocysteinase may play a key role in the control of methylations via regulation of the intracellular concentration of adenosylhomocysteine. The polypeptide is Adenosylhomocysteinase (SAHH) (Mesembryanthemum crystallinum (Common ice plant)).